Consider the following 437-residue polypeptide: Glutamyl-tRNA reductase (437 aa).

Substrate-binding positions include 49–52 (TCNR), Ser109, 114–116 (EGQ), and Gln120. Catalysis depends on Cys50, which acts as the Nucleophile. An NADP(+)-binding site is contributed by 198–203 (GAGRMS).

The protein belongs to the glutamyl-tRNA reductase family. As to quaternary structure, homodimer.

It catalyses the reaction (S)-4-amino-5-oxopentanoate + tRNA(Glu) + NADP(+) = L-glutamyl-tRNA(Glu) + NADPH + H(+). It participates in porphyrin-containing compound metabolism; protoporphyrin-IX biosynthesis; 5-aminolevulinate from L-glutamyl-tRNA(Glu): step 1/2. The protein operates within porphyrin-containing compound metabolism; chlorophyll biosynthesis. Its function is as follows. Catalyzes the NADPH-dependent reduction of glutamyl-tRNA(Glu) to glutamate 1-semialdehyde (GSA). In Synechococcus sp. (strain CC9311), this protein is Glutamyl-tRNA reductase.